Reading from the N-terminus, the 506-residue chain is Probable Xaa-Pro aminopeptidase PADG_06815 (506 aa).

Residues D285, D296, E433, and E471 each contribute to the Mn(2+) site.

It belongs to the peptidase M24B family. It depends on Mn(2+) as a cofactor.

It catalyses the reaction Release of any N-terminal amino acid, including proline, that is linked to proline, even from a dipeptide or tripeptide.. In terms of biological role, catalyzes the removal of a penultimate prolyl residue from the N-termini of peptides. The chain is Probable Xaa-Pro aminopeptidase PADG_06815 from Paracoccidioides brasiliensis (strain Pb18).